Consider the following 383-residue polypeptide: Cytochrome b (383 aa).

4 consecutive transmembrane segments (helical) span residues 32-52, 76-98, 113-133, and 179-199; these read VGSLLGLCLVMQMASGMFLAM, WLMRYIHANGASFFFMCLYLHMG, VWSMGVMMFMLTMATAFMGYC, and FFALHYLLPFILAALVVMHFM. Residues His82 and His96 each contribute to the heme b site. Heme b contacts are provided by His183 and His197. Residue His202 coordinates a ubiquinone. Transmembrane regions (helical) follow at residues 225 to 245, 289 to 309, 321 to 341, and 348 to 368; these read FVFKDLMTVFVFILMFSLFVF, LGGVMAMFAALLMLLMLPMTD, LSKLSFYLFLFNFFLLMNMGQ, and FIELGQFATVYYFSYFLMLVP.

It belongs to the cytochrome b family. In terms of assembly, fungal cytochrome b-c1 complex contains 10 subunits; 3 respiratory subunits, 2 core proteins and 5 low-molecular weight proteins. Cytochrome b-c1 complex is a homodimer. Requires heme b as cofactor.

Its subcellular location is the mitochondrion inner membrane. In terms of biological role, component of the ubiquinol-cytochrome c reductase complex (complex III or cytochrome b-c1 complex) that is part of the mitochondrial respiratory chain. The b-c1 complex mediates electron transfer from ubiquinol to cytochrome c. Contributes to the generation of a proton gradient across the mitochondrial membrane that is then used for ATP synthesis. The polypeptide is Cytochrome b (COB) (Debaryomyces hansenii (strain ATCC 36239 / CBS 767 / BCRC 21394 / JCM 1990 / NBRC 0083 / IGC 2968) (Yeast)).